We begin with the raw amino-acid sequence, 65 residues long: uncharacterized protein (65 aa).

It is found in the plastid. The protein resides in the chloroplast. This is an uncharacterized protein from Mesostigma viride (Green alga).